Reading from the N-terminus, the 404-residue chain is Phosphopentomutase (404 aa).

6 residues coordinate Mn(2+): D10, D303, H308, D344, H345, and H356.

It belongs to the phosphopentomutase family. Mn(2+) serves as cofactor.

Its subcellular location is the cytoplasm. The catalysed reaction is 2-deoxy-alpha-D-ribose 1-phosphate = 2-deoxy-D-ribose 5-phosphate. The enzyme catalyses alpha-D-ribose 1-phosphate = D-ribose 5-phosphate. It participates in carbohydrate degradation; 2-deoxy-D-ribose 1-phosphate degradation; D-glyceraldehyde 3-phosphate and acetaldehyde from 2-deoxy-alpha-D-ribose 1-phosphate: step 1/2. Isomerase that catalyzes the conversion of deoxy-ribose 1-phosphate (dRib-1-P) and ribose 1-phosphate (Rib-1-P) to deoxy-ribose 5-phosphate (dRib-5-P) and ribose 5-phosphate (Rib-5-P), respectively. The chain is Phosphopentomutase from Shewanella baltica (strain OS223).